The chain runs to 1978 residues: Sodium channel protein type 8 subunit alpha (1978 aa).

Disordered stretches follow at residues 1–20 (MAARLLAPPGPDSFKPFTPE) and 28–62 (RIAESKLKKPPKADGSHREDDEDSKPKPNSDLEAG). The Cytoplasmic portion of the chain corresponds to 1-132 (MAARLLAPPG…RIAIKILIHS (132 aa)). Basic and acidic residues predominate over residues 28-61 (RIAESKLKKPPKADGSHREDDEDSKPKPNSDLEA). The stretch at 114–442 (ILSPFNLIRR…KAMLEQLKKQ (329 aa)) is one I repeat. The helical transmembrane segment at 133–151 (VFSMIIMCTILTNCVFMTF) threads the bilayer. Over 152–158 (SNPPEWS) the chain is Extracellular. A helical membrane pass occupies residues 159 to 179 (KNVEYTFTGIYTFESLVKIIA). Residues 180 to 193 (RGFCIDGFTFLRDP) lie on the Cytoplasmic side of the membrane. A helical transmembrane segment spans residues 194–211 (WNWLDFSVIMMAYVTEFV). Residues 212–217 (DLGNVS) are Extracellular-facing. The N-linked (GlcNAc...) asparagine glycan is linked to N215. The helical transmembrane segment at 218-234 (ALRTFRVLRALKTISVI) threads the bilayer. Residues 235–253 (PGLKTIVGALIQSVKKLSD) are Cytoplasmic-facing. The chain crosses the membrane as a helical span at residues 254-273 (VMILTVFCLSVFALIGLQLF). The Extracellular portion of the chain corresponds to 274-355 (MGNLRNKCVV…PNYGYTSFDT (82 aa)). C281 and C333 form a disulfide bridge. N-linked (GlcNAc...) asparagine glycans are attached at residues N289, N295, N308, and N326. An intramembrane region (pore-forming) is located at residues 356–380 (FSWAFLALFRLMTQDYWENLYQLTL). E373 is a binding site for Na(+). Residues 381-387 (RAAGKTY) lie on the Extracellular side of the membrane. A helical membrane pass occupies residues 388–408 (MIFFVLVIFVGSFYLVNLILA). At 409 to 751 (VVAMAYEEQN…EIVNLIVMDP (343 aa)) the chain is on the cytoplasmic side. 2 disordered regions span residues 446-530 (AQAA…KAFR) and 576-597 (DPGSENEFADDEHSTVEESEGR). The span at 473–486 (SPRSSSELSKLSSK) shows a compositional bias: low complexity. Residues 489 to 500 (KERRNRRKKRKQ) are compositionally biased toward basic residues. Basic and acidic residues-rich tracts occupy residues 501–530 (KELSEGEEKGDPEKVFKSESEDGMRRKAFR) and 586–597 (DEHSTVEESEGR). Residues S518 and S520 each carry the phosphoserine modification. One copy of the II repeat lies at 733–1005 (CHPYWIKLKE…QISVIRIKKG (273 aa)). Residues 752–770 (FVDLAITICIVLNTLFMAM) traverse the membrane as a helical segment. Residues 771–781 (EHHPMTPQFEH) are Extracellular-facing. The helical transmembrane segment at 782–801 (VLAVGNLVFTGIFTAEMFLK) threads the bilayer. Residues 802–815 (LIAMDPYYYFQEGW) lie on the Cytoplasmic side of the membrane. Residues 816–835 (NIFDGFIVSLSLMELSLADV) traverse the membrane as a helical segment. Over 836-837 (EG) the chain is Extracellular. The chain crosses the membrane as a helical span at residues 838–855 (LSVLRSFRLLRVFKLAKS). Residues 856 to 871 (WPTLNMLIKIIGNSVG) are Cytoplasmic-facing. The chain crosses the membrane as a helical span at residues 872–890 (ALGNLTLVLAIIVFIFAVV). At 891 to 919 (GMQLFGKSYKECVCKINQECKLPRWHMND) the chain is on the extracellular side. C904 and C910 form a disulfide bridge. Residues 920-940 (FFHSFLIVFRVLCGEWIETMW) constitute an intramembrane region (pore-forming). E934 and E937 together coordinate Na(+). Over 941 to 953 (DCMEVAGQAMCLI) the chain is Extracellular. An intrachain disulfide couples C942 to C951. A helical transmembrane segment spans residues 954 to 974 (VFMMVMVIGNLVVLNLFLALL). The Cytoplasmic portion of the chain corresponds to 975–1197 (LSSFSADNLA…TCFLIVEHNW (223 aa)). Residues 1105–1146 (NLNTEDVSSESDPEGSKDKLDDTSSSEGSTIDIKPEVEEVPV) are disordered. One copy of the III repeat lies at 1178 to 1493 (LGKSWWILRK…KKYYNAMKKL (316 aa)). The chain crosses the membrane as a helical span at residues 1198–1215 (FETFIIFMILLSSGALAF). At 1216–1228 (EDIYIEQRKTIRT) the chain is on the extracellular side. A helical membrane pass occupies residues 1229 to 1247 (ILEYADKVFTYIFILEMLL). Topologically, residues 1248-1261 (KWTAYGFVKFFTNA) are cytoplasmic. A helical membrane pass occupies residues 1262–1280 (WCWLDFLIVAVSLVSLIAN). Topologically, residues 1281-1288 (ALGYSELG) are extracellular. Residues 1289-1307 (AIKSLRTLRALRPLRALSR) traverse the membrane as a helical segment. Over 1308 to 1324 (FEGMRVVVNALVGAIPS) the chain is Cytoplasmic. Residues 1325–1344 (IMNVLLVCLIFWLIFSIMGV) traverse the membrane as a helical segment. Residues 1345–1397 (NLFAGKYHYCFNETSEIRFEIDIVNNKTDCEKLMEGNSTEIRWKNVKINFDNV) lie on the Extracellular side of the membrane. C1354 and C1374 form a disulfide bridge. N-linked (GlcNAc...) asparagine glycans are attached at residues N1356, N1370, and N1381. An intramembrane region (pore-forming) is located at residues 1398–1419 (GAGYLALLQVATFKGWMDIMYA). Topologically, residues 1420–1436 (AVDSRKPDEQPDYEGNI) are extracellular. Residues 1437–1458 (YMYIYFVIFIIFGSFFTLNLFI) form a helical membrane-spanning segment. Over 1459-1521 (GVIIDNFNQQ…IVFDFVTQQA (63 aa)) the chain is Cytoplasmic. The residue at position 1495 (S1495) is a Phosphoserine; by PKC. Residues 1502–1799 (IPRPLNKIQG…WEKFDPDATQ (298 aa)) form an IV repeat. A helical membrane pass occupies residues 1522–1539 (FDIVIMMLICLNMVTMMV). Over 1540 to 1550 (ETDTQSKQMEN) the chain is Extracellular. Residues 1551–1569 (ILYWINLVFVIFFTCECVL) form a helical membrane-spanning segment. Over 1570 to 1581 (KMFALRHYYFTI) the chain is Cytoplasmic. The chain crosses the membrane as a helical span at residues 1582 to 1599 (GWNIFDFVVVILSIVGMF). Topologically, residues 1600–1612 (LADIIEKYFVSPT) are extracellular. Residues 1613 to 1629 (LFRVIRLARIGRILRLI) traverse the membrane as a helical segment. Residues 1630-1648 (KGAKGIRTLLFALMMSLPA) lie on the Cytoplasmic side of the membrane. Residues 1649-1666 (LFNIGLLLFLVMFIFSIF) form a helical membrane-spanning segment. Topologically, residues 1667-1688 (GMSNFAYVKHEAGIDDMFNFET) are extracellular. The pore-forming intramembrane region spans 1689 to 1711 (FGNSMICLFQITTSAGWDGLLLP). Residues 1712 to 1740 (ILNRPPDCSLDKEHPGSGFKGDCGNPSVG) are Extracellular-facing. An intrachain disulfide couples C1719 to C1734. A helical transmembrane segment spans residues 1741 to 1763 (IFFFVSYIIISFLIVVNMYIAII). Topologically, residues 1764 to 1978 (LENFSVATEE…RQKEVRESKC (215 aa)) are cytoplasmic. The IQ domain occupies 1893–1922 (EEVSAVVLQRAYRGHLARRGFICRKMASNK). A disordered region spans residues 1923 to 1978 (LENGGTHRDKKESTPSTASLPSYDSVTKPDKEKQQRAEEGRRERAKRQKEVRESKC). Residues 1936–1947 (TPSTASLPSYDS) show a composition bias toward polar residues. Positions 1949–1978 (TKPDKEKQQRAEEGRRERAKRQKEVRESKC) are enriched in basic and acidic residues.

This sequence belongs to the sodium channel (TC 1.A.1.10) family. Nav1.6/SCN8A subfamily. The voltage-sensitive sodium channel consists of an ion-conducting pore-forming alpha subunit regulated by one or more beta-1 (SCN1B), beta-2 (SCN2B), beta-3 (SCN3B) and/or beta-4 (SCN4B) subunits. Beta-1 (SCN1B) and beta-3 (SCN3B) are non-covalently associated with alpha, while beta-2 (SCN2B) and beta-4 (SCN4B) are covalently linked by disulfide bonds. Interacts with NEDD4 and NEDD4L. Interacts with FGF13. Interacts with FGF14, GBG3, GBB2 and SCN1B. Interacts with TMEM233. Interacts with the conotoxin GVIIJ. Interacts with CALM1; the interaction modulates the inactivation rate of SCN8A. May be ubiquitinated by NEDD4L; which would promote its endocytosis. Post-translationally, phosphorylation at Ser-1495 by PKC in a highly conserved cytoplasmic loop slows inactivation of the sodium channel and reduces peak sodium currents. Isoform 1 is highly expressed in brain, moderately in spinal cord, and at low levels in dorsal root ganglia, nodose ganglia and superior cervical ganglia. Not detected in sciatic nerve and non-neuronal tissues. Isoform 2 is hardly detectable, if at all, in brain, expressed at low levels in spinal cord and at highest levels in dorsal root ganglia.

Its subcellular location is the cell membrane. It localises to the cell projection. The protein localises to the axon. The enzyme catalyses Na(+)(in) = Na(+)(out). Functionally, pore-forming subunit of a voltage-gated sodium channel complex assuming opened or closed conformations in response to the voltage difference across membranes and through which sodium ions selectively pass along their electrochemical gradient. Contributes to neuronal excitability by regulating action potential threshold and propagation. The chain is Sodium channel protein type 8 subunit alpha from Rattus norvegicus (Rat).